A 149-amino-acid chain; its full sequence is uncharacterized protein (149 aa).

The 113-residue stretch at 16–128 (PAGEPAIRVI…LFTFVAIDED (113 aa)) folds into the HotDog ACOT-type domain.

This sequence belongs to the acyl coenzyme A hydrolase family.

This is an uncharacterized protein from Zymomonas mobilis subsp. mobilis (strain ATCC 31821 / ZM4 / CP4).